The sequence spans 447 residues: Tubulin beta chain (447 aa).

Positions 11, 69, 138, 142, 143, 144, 204, and 226 each coordinate GTP. Glutamate 69 serves as a coordination point for Mg(2+). A disordered region spans residues glutamine 424–glutamate 447. The span at serine 433–glutamate 447 shows a compositional bias: acidic residues.

It belongs to the tubulin family. As to quaternary structure, dimer of alpha and beta chains. A typical microtubule is a hollow water-filled tube with an outer diameter of 25 nm and an inner diameter of 15 nM. Alpha-beta heterodimers associate head-to-tail to form protofilaments running lengthwise along the microtubule wall with the beta-tubulin subunit facing the microtubule plus end conferring a structural polarity. Microtubules usually have 13 protofilaments but different protofilament numbers can be found in some organisms and specialized cells. The cofactor is Mg(2+). Lens specific.

It is found in the cytoplasm. It localises to the cytoskeleton. Functionally, tubulin is the major constituent of microtubules, a cylinder consisting of laterally associated linear protofilaments composed of alpha- and beta-tubulin heterodimers. Microtubules grow by the addition of GTP-tubulin dimers to the microtubule end, where a stabilizing cap forms. Below the cap, tubulin dimers are in GDP-bound state, owing to GTPase activity of alpha-tubulin. The chain is Tubulin beta chain from Enteroctopus dofleini (North Pacific giant octopus).